Consider the following 116-residue polypeptide: Chondroitin proteoglycan 7 (116 aa).

A signal peptide spans 1–19 (MQTITILALIACVAVPIFA). The segment at 29–102 (DVVESSGEGS…NAVVASDSPK (74 aa)) is disordered. Low complexity-rich tracts occupy residues 32–41 (ESSGEGSGES) and 48–58 (VESSGEGSGES). Ser-68, Ser-72, Ser-76, Ser-84, and Ser-88 each carry an O-linked (Xyl...) (chondroitin sulfate) serine glycan.

This chain is Chondroitin proteoglycan 7, found in Caenorhabditis elegans.